Reading from the N-terminus, the 277-residue chain is Large ribosomal subunit protein uL2 (277 aa).

Residues 219–277 (TVRGSVMNPNDHPHGGGEGRAPIGRKSPMSPWGKPTLGFKTRKKKNKSDKFIVRRRKNK) are disordered. The span at 258–277 (KTRKKKNKSDKFIVRRRKNK) shows a compositional bias: basic residues.

It belongs to the universal ribosomal protein uL2 family. In terms of assembly, part of the 50S ribosomal subunit. Forms a bridge to the 30S subunit in the 70S ribosome.

In terms of biological role, one of the primary rRNA binding proteins. Required for association of the 30S and 50S subunits to form the 70S ribosome, for tRNA binding and peptide bond formation. It has been suggested to have peptidyltransferase activity; this is somewhat controversial. Makes several contacts with the 16S rRNA in the 70S ribosome. This is Large ribosomal subunit protein uL2 from Bacillus subtilis (strain 168).